Reading from the N-terminus, the 413-residue chain is 2,3-bisphosphoglycerate-independent phosphoglycerate mutase (413 aa).

It belongs to the BPG-independent phosphoglycerate mutase family. A-PGAM subfamily.

It carries out the reaction (2R)-2-phosphoglycerate = (2R)-3-phosphoglycerate. The protein operates within carbohydrate degradation; glycolysis; pyruvate from D-glyceraldehyde 3-phosphate: step 3/5. Catalyzes the interconversion of 2-phosphoglycerate and 3-phosphoglycerate. The sequence is that of 2,3-bisphosphoglycerate-independent phosphoglycerate mutase from Sulfolobus acidocaldarius (strain ATCC 33909 / DSM 639 / JCM 8929 / NBRC 15157 / NCIMB 11770).